Here is a 184-residue protein sequence, read N- to C-terminus: Peptide deformylase (184 aa).

Residues C92 and H134 each contribute to the Fe cation site. Residue E135 is part of the active site. H138 is a binding site for Fe cation.

It belongs to the polypeptide deformylase family. Requires Fe(2+) as cofactor.

It carries out the reaction N-terminal N-formyl-L-methionyl-[peptide] + H2O = N-terminal L-methionyl-[peptide] + formate. Functionally, removes the formyl group from the N-terminal Met of newly synthesized proteins. Requires at least a dipeptide for an efficient rate of reaction. N-terminal L-methionine is a prerequisite for activity but the enzyme has broad specificity at other positions. The chain is Peptide deformylase from Psychrobacter cryohalolentis (strain ATCC BAA-1226 / DSM 17306 / VKM B-2378 / K5).